The following is a 510-amino-acid chain: Ninja-family protein mc410 (510 aa).

Disordered stretches follow at residues 1 to 179, 323 to 414, and 481 to 510; these read MDEN…RQIL, HPSH…PSEF, and RHAS…SAQS. Basic and acidic residues-rich tracts occupy residues 31 to 44 and 103 to 146; these read SKVE…KVIN and RPVE…DKTR. Residues 148 to 160 are compositionally biased toward polar residues; that stretch reads SHISITTDEGSTA. Composition is skewed to basic and acidic residues over residues 363–389 and 397–406; these read RAME…EENV and RAKDPPDQPR. The segment covering 485–496 has biased composition (polar residues); it reads VEQTSQEPGTGV. Residues 497-510 show a composition bias toward low complexity; sequence SSFPSSNPAASAQS.

The protein belongs to the Ninja family.

Its subcellular location is the nucleus. In Nicotiana tabacum (Common tobacco), this protein is Ninja-family protein mc410 (MC410).